We begin with the raw amino-acid sequence, 490 residues long: Selenium-binding protein 1 (490 aa).

N-acetylalanine is present on Ala-2. Cys-21 and Cys-22 together coordinate selenite.

Belongs to the selenium-binding protein family. As to quaternary structure, interacts with GRXS14 and GRXS16. Interacts with DALL3. Expressed in seedlings, roots, leaves, stems and flowers.

Binds cadmium and mediates lower sensitivity to stress requiring glutathione (GSH) for tolerance (e.g. cadmium, selenate, and hydrogen peroxide excess). Probably helps to detoxify cadmium potentially through direct binding. Binds selenium, cadmium, zinc and nickel in vitro. The chain is Selenium-binding protein 1 from Arabidopsis thaliana (Mouse-ear cress).